Consider the following 310-residue polypeptide: Zinc finger protein 346 (310 aa).

M1 is modified (N-acetylmethionine). Positions 1-12 (MEYPAPAAVQAA) are enriched in low complexity. A disordered region spans residues 1–33 (MEYPAPAAVQAADGGGAGPYNSSELLEGQEPDG). The Matrin-type 1 zinc-finger motif lies at 70–104 (FTNTQCKVCCALLISESQKLAHYQSKKHANKVKRY). 4 residues coordinate Zn(2+): C75, C78, H91, and H97. A Glycyl lysine isopeptide (Lys-Gly) (interchain with G-Cter in SUMO2) cross-link involves residue K114. The Matrin-type 2 zinc finger occupies 131–165 (DKNQCCPICNMTFSSPVVAQSHYLGKTHAKNLKLK). Zn(2+) contacts are provided by C136, C139, H152, and H158. A Glycyl lysine isopeptide (Lys-Gly) (interchain with G-Cter in SUMO2) cross-link involves residue K170. 2 consecutive Matrin-type zinc fingers follow at residues 198 to 232 (DPDK…ETKL) and 252 to 286 (GKGY…SPKT). The tract at residues 278–310 (KHKNQSPKTVASSLGQIPMQRQPIQKDSTTLED) is disordered. Composition is skewed to polar residues over residues 283-292 (SPKTVASSLG) and 299-310 (QPIQKDSTTLED).

As to quaternary structure, forms a heteromeric complex with XPO5 and ILF3. Found in a nuclear export complex with XPO5, RAN, ILF3, ZNF346 and double-stranded RNA. Interacts with XPO5. Interacts with ILF3 in an RNA-independent manner.

The protein resides in the nucleus. It localises to the nucleolus. Its subcellular location is the cytoplasm. Binds with low affinity to dsDNA and ssRNA, and with high affinity to dsRNA, with no detectable sequence specificity. This Pongo abelii (Sumatran orangutan) protein is Zinc finger protein 346 (ZNF346).